The following is a 300-amino-acid chain: 4-hydroxy-tetrahydrodipicolinate synthase (300 aa).

Residue T45 coordinates pyruvate. The active-site Proton donor/acceptor is the Y140. K169 acts as the Schiff-base intermediate with substrate in catalysis. I210 contributes to the pyruvate binding site.

The protein belongs to the DapA family. As to quaternary structure, homotetramer; dimer of dimers.

It is found in the cytoplasm. The enzyme catalyses L-aspartate 4-semialdehyde + pyruvate = (2S,4S)-4-hydroxy-2,3,4,5-tetrahydrodipicolinate + H2O + H(+). It participates in amino-acid biosynthesis; L-lysine biosynthesis via DAP pathway; (S)-tetrahydrodipicolinate from L-aspartate: step 3/4. Catalyzes the condensation of (S)-aspartate-beta-semialdehyde [(S)-ASA] and pyruvate to 4-hydroxy-tetrahydrodipicolinate (HTPA). This is 4-hydroxy-tetrahydrodipicolinate synthase from Helicobacter pylori (strain Shi470).